The following is a 390-amino-acid chain: Queuine tRNA-ribosyltransferase (390 aa).

Asp-92 acts as the Proton acceptor in catalysis. Residues 92-96, Asp-146, Gln-195, and Gly-222 contribute to the substrate site; that span reads DSGGF. The segment at 253–259 is RNA binding; it reads GVGTPED. Asp-272 acts as the Nucleophile in catalysis. Residues 277–281 form an RNA binding; important for wobble base 34 recognition region; the sequence is TRNAR. Positions 310, 312, 315, and 354 each coordinate Zn(2+).

Belongs to the queuine tRNA-ribosyltransferase family. In terms of assembly, homodimer. Within each dimer, one monomer is responsible for RNA recognition and catalysis, while the other monomer binds to the replacement base PreQ1. Requires Zn(2+) as cofactor.

The catalysed reaction is 7-aminomethyl-7-carbaguanine + guanosine(34) in tRNA = 7-aminomethyl-7-carbaguanosine(34) in tRNA + guanine. It participates in tRNA modification; tRNA-queuosine biosynthesis. Catalyzes the base-exchange of a guanine (G) residue with the queuine precursor 7-aminomethyl-7-deazaguanine (PreQ1) at position 34 (anticodon wobble position) in tRNAs with GU(N) anticodons (tRNA-Asp, -Asn, -His and -Tyr). Catalysis occurs through a double-displacement mechanism. The nucleophile active site attacks the C1' of nucleotide 34 to detach the guanine base from the RNA, forming a covalent enzyme-RNA intermediate. The proton acceptor active site deprotonates the incoming PreQ1, allowing a nucleophilic attack on the C1' of the ribose to form the product. After dissociation, two additional enzymatic reactions on the tRNA convert PreQ1 to queuine (Q), resulting in the hypermodified nucleoside queuosine (7-(((4,5-cis-dihydroxy-2-cyclopenten-1-yl)amino)methyl)-7-deazaguanosine). The chain is Queuine tRNA-ribosyltransferase from Paracidovorax citrulli (strain AAC00-1) (Acidovorax citrulli).